The chain runs to 809 residues: Sucrose synthase 4 (809 aa).

Residues 275-753 (MIFNVVVVSP…GLQRIYEKYT (479 aa)) are GT-B glycosyltransferase.

This sequence belongs to the glycosyltransferase 1 family. Plant sucrose synthase subfamily. As to expression, predominantly expressed in the leaf tissues and in caryopses.

The enzyme catalyses an NDP-alpha-D-glucose + D-fructose = a ribonucleoside 5'-diphosphate + sucrose + H(+). In terms of biological role, sucrose-cleaving enzyme that provides UDP-glucose and fructose for various metabolic pathways. The chain is Sucrose synthase 4 (SUS4) from Oryza sativa subsp. japonica (Rice).